The following is a 141-amino-acid chain: Nucleoside diphosphate kinase (141 aa).

ATP is bound by residues Lys-11, Phe-59, Arg-87, Thr-93, Arg-104, and Asn-114. The active-site Pros-phosphohistidine intermediate is His-117.

Belongs to the NDK family. As to quaternary structure, homotetramer. Mg(2+) is required as a cofactor.

It is found in the cytoplasm. It carries out the reaction a 2'-deoxyribonucleoside 5'-diphosphate + ATP = a 2'-deoxyribonucleoside 5'-triphosphate + ADP. The enzyme catalyses a ribonucleoside 5'-diphosphate + ATP = a ribonucleoside 5'-triphosphate + ADP. Major role in the synthesis of nucleoside triphosphates other than ATP. The ATP gamma phosphate is transferred to the NDP beta phosphate via a ping-pong mechanism, using a phosphorylated active-site intermediate. The sequence is that of Nucleoside diphosphate kinase from Actinobacillus succinogenes (strain ATCC 55618 / DSM 22257 / CCUG 43843 / 130Z).